Consider the following 934-residue polypeptide: MVPEAWRSGLVSTGRVVGVLLLLGALNKASTVIHYEIPEEREKGFAVGNVVANLGLDLGSLSARRFRVVSGASRRFFEVNRETGEMFVNDRLDREELCGTLPSCTVTLELVVENPLELFSVEVVIQDINDNNPAFPTQEMKLEISEAVAPGTRFPLESAHDPDVGSNSLQTYELSRNEYFALRVQTREDSTKYAELVLERALDREREPSLQLVLTALDGGTPALSASLPIHIKVLDANDNAPVFNQSLYRARVLEDAPSGTRVVQVLATDLDEGPNGEIIYSFGSHNRAGVRQLFALDLVTGMLTIKGRLDFEDTKLHEIYIQAKDKGANPEGAHCKVLVEVVDVNDNAPEITVTSVYSPVPEDAPLGTVIALLSVTDLDAGENGLVTCEVPPGLPFSLTSSLKNYFTLKTSADLDRETVPEYNLSITARDAGTPSLSALTIVRVQVSDINDNPPQSSQSSYDVYIEENNLPGAPILNLSVWDPDAPQNARLSFFLLEQGAETGLVGRYFTINRDNGIVSSLVPLDYEDRREFELTAHISDGGTPVLATNISVNIFVTDRNDNAPQVLYPRPGGSSVEMLPRGTSAGHLVSRVVGWDADAGHNAWLSYSLLGSPNQSLFAIGLHTGQISTARPVQDTDSPRQTLTVLIKDNGEPSLSTTATLTVSVTEDSPEARAEFPSGSAPREQKKNLTFYLLLSLILVSVGFVVTVFGVIIFKVYKWKQSRDLYRAPVSSLYRTPGPSLHADAVRGGLMSPHLYHQVYLTTDSRRSDPLLKKPGAASPLASRQNTLRSCDPVFYRQVLGAESAPPGQQAPPNTDWRFSQAQRPGTSGSQNGDDTGTWPNNQFDTEMLQAMILASASEAADGSSTLGGGAGTMGLSARYGPQFTLQHVPDYRQNVYIPGSNATLTNAAGKRDGKAPAGGNGNKKKSGKKEKK.

A signal peptide spans 1–31; sequence MVPEAWRSGLVSTGRVVGVLLLLGALNKAST. Cadherin domains are found at residues 32-135, 136-244, 245-352, 353-457, 458-567, and 572-685; these read VIHY…NPAF, PTQE…APVF, NQSL…APEI, TVTS…PPQS, SQSS…APQV, and PGGS…APRE. Residues 32–693 are Extracellular-facing; that stretch reads VIHYEIPEER…REQKKNLTFY (662 aa). 6 N-linked (GlcNAc...) asparagine glycosylation sites follow: Asn245, Asn424, Asn478, Asn550, Asn615, and Asn689. The chain crosses the membrane as a helical span at residues 694-714; sequence LLLSLILVSVGFVVTVFGVII. Residues 715–934 are Cytoplasmic-facing; sequence FKVYKWKQSR…KKKSGKKEKK (220 aa). Disordered regions lie at residues 804 to 843 and 904 to 934; these read ESAPPGQQAPPNTDWRFSQAQRPGTSGSQNGDDTGTWPNN and ATLTNAAGKRDGKAPAGGNGNKKKSGKKEKK. Residues 812-843 show a composition bias toward polar residues; that stretch reads APPNTDWRFSQAQRPGTSGSQNGDDTGTWPNN. Residues 924–934 show a composition bias toward basic residues; it reads NKKKSGKKEKK.

The protein resides in the cell membrane. Potential calcium-dependent cell-adhesion protein. May be involved in the establishment and maintenance of specific neuronal connections in the brain. This is Protocadherin gamma-C3 (PCDHGC3) from Homo sapiens (Human).